Here is a 418-residue protein sequence, read N- to C-terminus: Serine hydroxymethyltransferase (418 aa).

Residues Leu-118 and 122-124 (GHL) each bind (6S)-5,6,7,8-tetrahydrofolate. Position 227 is an N6-(pyridoxal phosphate)lysine (Lys-227). Glu-242 contacts (6S)-5,6,7,8-tetrahydrofolate.

It belongs to the SHMT family. As to quaternary structure, homodimer. Pyridoxal 5'-phosphate is required as a cofactor.

The protein resides in the cytoplasm. It carries out the reaction (6R)-5,10-methylene-5,6,7,8-tetrahydrofolate + glycine + H2O = (6S)-5,6,7,8-tetrahydrofolate + L-serine. It functions in the pathway one-carbon metabolism; tetrahydrofolate interconversion. Its pathway is amino-acid biosynthesis; glycine biosynthesis; glycine from L-serine: step 1/1. Its function is as follows. Catalyzes the reversible interconversion of serine and glycine with tetrahydrofolate (THF) serving as the one-carbon carrier. This reaction serves as the major source of one-carbon groups required for the biosynthesis of purines, thymidylate, methionine, and other important biomolecules. Also exhibits THF-independent aldolase activity toward beta-hydroxyamino acids, producing glycine and aldehydes, via a retro-aldol mechanism. This chain is Serine hydroxymethyltransferase, found in Chloroflexus aggregans (strain MD-66 / DSM 9485).